A 374-amino-acid polypeptide reads, in one-letter code: Nudix hydrolase 20, chloroplastic (374 aa).

Residues 1 to 49 constitute a chloroplast transit peptide; sequence MASGFCSLALTVTTSLFSSHAITRRVLPILRWRSSSMSLSPLRHSRALS. The 142-residue stretch at 205–346 folds into the Nudix hydrolase domain; the sequence is GYGVHMNGYV…KANCSLVIID (142 aa). The short motif at 244–265 is the Nudix box element; that stretch reads GGLPHGISCGGNLVKECEEEAG. Positions 259 and 263 each coordinate Mg(2+).

The protein belongs to the Nudix hydrolase family. The cofactor is Mg(2+). Mn(2+) is required as a cofactor. Expressed in leaves and inflorescences.

The protein localises to the plastid. Its subcellular location is the chloroplast. Probably mediates the hydrolysis of some nucleoside diphosphate derivatives. The sequence is that of Nudix hydrolase 20, chloroplastic (NUDT20) from Arabidopsis thaliana (Mouse-ear cress).